A 164-amino-acid chain; its full sequence is Phosphopantetheine adenylyltransferase (164 aa).

Residue Ser-9 participates in substrate binding. Residues 9-10 (SF) and His-17 contribute to the ATP site. Residues Lys-41, Leu-73, and Arg-87 each coordinate substrate. Residues 88-90 (GLR), Glu-98, and 123-129 (YTFLSSS) each bind ATP.

It belongs to the bacterial CoaD family. As to quaternary structure, homohexamer. The cofactor is Mg(2+).

Its subcellular location is the cytoplasm. The catalysed reaction is (R)-4'-phosphopantetheine + ATP + H(+) = 3'-dephospho-CoA + diphosphate. The protein operates within cofactor biosynthesis; coenzyme A biosynthesis; CoA from (R)-pantothenate: step 4/5. Its function is as follows. Reversibly transfers an adenylyl group from ATP to 4'-phosphopantetheine, yielding dephospho-CoA (dPCoA) and pyrophosphate. This Dictyoglomus thermophilum (strain ATCC 35947 / DSM 3960 / H-6-12) protein is Phosphopantetheine adenylyltransferase.